We begin with the raw amino-acid sequence, 467 residues long: Na(+)-translocating NADH-quinone reductase subunit A (467 aa).

This sequence belongs to the NqrA family. As to quaternary structure, composed of six subunits; NqrA, NqrB, NqrC, NqrD, NqrE and NqrF.

The catalysed reaction is a ubiquinone + n Na(+)(in) + NADH + H(+) = a ubiquinol + n Na(+)(out) + NAD(+). NQR complex catalyzes the reduction of ubiquinone-1 to ubiquinol by two successive reactions, coupled with the transport of Na(+) ions from the cytoplasm to the periplasm. NqrA to NqrE are probably involved in the second step, the conversion of ubisemiquinone to ubiquinol. The chain is Na(+)-translocating NADH-quinone reductase subunit A from Chlamydia pneumoniae (Chlamydophila pneumoniae).